Here is a 107-residue protein sequence, read N- to C-terminus: YcgL domain-containing protein Psyc_0800 (107 aa).

Residues 1 to 95 (MHCDIYKFLK…QDVMRRQAEL (95 aa)) form the YcgL domain.

The sequence is that of YcgL domain-containing protein Psyc_0800 from Psychrobacter arcticus (strain DSM 17307 / VKM B-2377 / 273-4).